The primary structure comprises 261 residues: Pantothenate synthetase (261 aa).

Residue 29–36 (MGALHNGH) participates in ATP binding. The active-site Proton donor is the His-36. Gln-60 contributes to the (R)-pantoate binding site. Residue Gln-60 coordinates beta-alanine. 147-150 (GEKD) contacts ATP. Position 153 (Gln-153) interacts with (R)-pantoate. 184 to 187 (LSSR) is an ATP binding site.

Belongs to the pantothenate synthetase family. Homodimer.

The protein resides in the cytoplasm. It catalyses the reaction (R)-pantoate + beta-alanine + ATP = (R)-pantothenate + AMP + diphosphate + H(+). It participates in cofactor biosynthesis; (R)-pantothenate biosynthesis; (R)-pantothenate from (R)-pantoate and beta-alanine: step 1/1. In terms of biological role, catalyzes the condensation of pantoate with beta-alanine in an ATP-dependent reaction via a pantoyl-adenylate intermediate. The protein is Pantothenate synthetase of Francisella philomiragia subsp. philomiragia (strain ATCC 25017 / CCUG 19701 / FSC 153 / O#319-036).